Consider the following 141-residue polypeptide: Nucleoside diphosphate kinase (141 aa).

Positions 11, 59, 87, 93, 104, and 114 each coordinate ATP. Residue His117 is the Pros-phosphohistidine intermediate of the active site.

The protein belongs to the NDK family. In terms of assembly, homotetramer. Mg(2+) serves as cofactor.

The protein localises to the cytoplasm. The enzyme catalyses a 2'-deoxyribonucleoside 5'-diphosphate + ATP = a 2'-deoxyribonucleoside 5'-triphosphate + ADP. The catalysed reaction is a ribonucleoside 5'-diphosphate + ATP = a ribonucleoside 5'-triphosphate + ADP. Major role in the synthesis of nucleoside triphosphates other than ATP. The ATP gamma phosphate is transferred to the NDP beta phosphate via a ping-pong mechanism, using a phosphorylated active-site intermediate. This is Nucleoside diphosphate kinase from Vibrio parahaemolyticus serotype O3:K6 (strain RIMD 2210633).